Reading from the N-terminus, the 215-residue chain is MOB kinase activator-like 1B (215 aa).

The tract at residues 1 to 29 is disordered; the sequence is MSLFGLGSRNQKTFRPKKSAPTGSKGAQL. Zn(2+)-binding residues include Cys-80, Cys-85, His-162, and His-167.

The protein belongs to the MOB1/phocein family. Constitutively expressed with higher expression in roots, flowers and pods than in leaves and stems.

It is found in the cytoplasm. It localises to the cytoskeleton. The protein resides in the phragmoplast. The chain is MOB kinase activator-like 1B from Medicago sativa subsp. falcata (Sickle medic).